Here is a 358-residue protein sequence, read N- to C-terminus: UDP-N-acetylglucosamine--N-acetylmuramyl-(pentapeptide) pyrophosphoryl-undecaprenol N-acetylglucosamine transferase (358 aa).

UDP-N-acetyl-alpha-D-glucosamine is bound by residues 11–13 (TGG), Asn-122, Arg-161, Ser-189, Ile-243, 262–267 (ALTVCE), and Gln-288.

This sequence belongs to the glycosyltransferase 28 family. MurG subfamily.

It localises to the cell inner membrane. It catalyses the reaction di-trans,octa-cis-undecaprenyl diphospho-N-acetyl-alpha-D-muramoyl-L-alanyl-D-glutamyl-meso-2,6-diaminopimeloyl-D-alanyl-D-alanine + UDP-N-acetyl-alpha-D-glucosamine = di-trans,octa-cis-undecaprenyl diphospho-[N-acetyl-alpha-D-glucosaminyl-(1-&gt;4)]-N-acetyl-alpha-D-muramoyl-L-alanyl-D-glutamyl-meso-2,6-diaminopimeloyl-D-alanyl-D-alanine + UDP + H(+). It participates in cell wall biogenesis; peptidoglycan biosynthesis. Cell wall formation. Catalyzes the transfer of a GlcNAc subunit on undecaprenyl-pyrophosphoryl-MurNAc-pentapeptide (lipid intermediate I) to form undecaprenyl-pyrophosphoryl-MurNAc-(pentapeptide)GlcNAc (lipid intermediate II). The sequence is that of UDP-N-acetylglucosamine--N-acetylmuramyl-(pentapeptide) pyrophosphoryl-undecaprenol N-acetylglucosamine transferase from Coxiella burnetii (strain CbuK_Q154) (Coxiella burnetii (strain Q154)).